A 387-amino-acid chain; its full sequence is Lactosylceramide alpha-2,3-sialyltransferase (387 aa).

Topologically, residues 1 to 33 (MPNEFTSAKLRSDCSRTSLQWYTQTQHKMRRPS) are cytoplasmic. The helical; Signal-anchor for type II membrane protein transmembrane segment at 34–54 (LLLKDILKCMLVVFGVWLLYI) threads the bilayer. Residues 55–387 (LKLNYTAEEC…VVQDLSGGIH (333 aa)) are Extracellular-facing. Asparagine 58 and asparagine 208 each carry an N-linked (GlcNAc...) asparagine glycan. Cysteine 167 and cysteine 325 form a disulfide bridge.

It belongs to the glycosyltransferase 29 family.

The protein resides in the golgi apparatus membrane. It carries out the reaction a beta-D-Gal-(1-&gt;4)-beta-D-Glc-(1&lt;-&gt;1)-Cer(d18:1(4E)) + CMP-N-acetyl-beta-neuraminate = a ganglioside GM3 (d18:1(4E)) + CMP + H(+). The enzyme catalyses ganglioside GA2 (d18:1(4E)/18:0) + CMP-N-acetyl-beta-neuraminate = ganglioside GM2 (d18:1(4E)/18:0) + CMP + H(+). The catalysed reaction is a beta-D-Gal-(1&lt;-&gt;1')-ceramide + CMP-N-acetyl-beta-neuraminate = N-acetyl-alpha-neuraminosyl-(2-&gt;3)-beta-D-galactosyl-(1&lt;-&gt;1')-ceramide + CMP + H(+). It catalyses the reaction ganglioside GA1 (d18:1(4E)/18:0) + CMP-N-acetyl-beta-neuraminate = ganglioside GM1 (d18:1(4E)/18:0) + CMP + H(+). In terms of biological role, transfers the sialyl group (N-acetyl-alpha-neuraminyl or NeuAc) from CMP-NeuAc to the non-reducing terminal galactose (Gal) of glycosphingolipids forming gangliosides (important molecules involved in the regulation of multiple cellular processes, including cell proliferation and differentiation, apoptosis, embryogenesis, development, and oncogenesis). Mainly involved in the biosynthesis of ganglioside GM3 but can also use different glycolipids as substrate acceptors such as D-galactosylceramide (GalCer), asialo-GM2 (GA2) and asialo-GM1 (GA1), although less preferentially than beta-D-Gal-(1-&gt;4)-beta-D-Glc-(1&lt;-&gt;1)-Cer (LacCer). The sequence is that of Lactosylceramide alpha-2,3-sialyltransferase (St3gal5) from Rattus norvegicus (Rat).